Reading from the N-terminus, the 239-residue chain is 7-cyano-7-deazaguanine synthase (239 aa).

12 to 22 (FSGGQDSATCL) contacts ATP. Zn(2+) is bound by residues cysteine 200, cysteine 215, cysteine 218, and cysteine 221.

Belongs to the QueC family. Requires Zn(2+) as cofactor.

The enzyme catalyses 7-carboxy-7-deazaguanine + NH4(+) + ATP = 7-cyano-7-deazaguanine + ADP + phosphate + H2O + H(+). It functions in the pathway purine metabolism; 7-cyano-7-deazaguanine biosynthesis. Its function is as follows. Catalyzes the ATP-dependent conversion of 7-carboxy-7-deazaguanine (CDG) to 7-cyano-7-deazaguanine (preQ(0)). The chain is 7-cyano-7-deazaguanine synthase from Hyphomonas neptunium (strain ATCC 15444).